A 392-amino-acid chain; its full sequence is Methylthioribose kinase (392 aa).

ATP-binding positions include N38, K53, and 107-109 (EDL). D225 is a substrate binding site. 242 to 244 (DPE) contributes to the ATP binding site. R332 lines the substrate pocket.

It belongs to the methylthioribose kinase family. Homodimer.

The enzyme catalyses 5-(methylsulfanyl)-D-ribose + ATP = 5-(methylsulfanyl)-alpha-D-ribose 1-phosphate + ADP + H(+). Its pathway is amino-acid biosynthesis; L-methionine biosynthesis via salvage pathway; S-methyl-5-thio-alpha-D-ribose 1-phosphate from S-methyl-5'-thioadenosine (hydrolase route): step 2/2. In terms of biological role, catalyzes the phosphorylation of methylthioribose into methylthioribose-1-phosphate. The chain is Methylthioribose kinase from Bacillus mycoides (strain KBAB4) (Bacillus weihenstephanensis).